The chain runs to 274 residues: MPELPEVETVKRTLTELVIGKTIAGITVKWANIIKEPADVLEFETLLMNQTIRSIRRRGKFLLFEFDDIVMVSHLRMEGRYGLYEKEEPLPPHTHVIFHFTDGEELRYQDVRKFGTMHLFPKGSEEKVLPLAHLGVEPFSEQFTSELLMNAFQKTNRKIKVALLDQKTVVGLGNIYVDEALFRARIHPERLAHSLSKEEMAVLHKAIVSTLEEAVEMGGSSIKSYVNGQGEMGMFQQKLGVYGRKNEPCRQCGTDILKTVVGGRGTHFCPNCQL.

The Schiff-base intermediate with DNA role is filled by proline 2. The Proton donor role is filled by glutamate 3. The Proton donor; for beta-elimination activity role is filled by lysine 60. 2 residues coordinate DNA: histidine 93 and arginine 112. The FPG-type zinc finger occupies 240-274 (GVYGRKNEPCRQCGTDILKTVVGGRGTHFCPNCQL). Arginine 264 functions as the Proton donor; for delta-elimination activity in the catalytic mechanism.

The protein belongs to the FPG family. Monomer. The cofactor is Zn(2+).

It carries out the reaction Hydrolysis of DNA containing ring-opened 7-methylguanine residues, releasing 2,6-diamino-4-hydroxy-5-(N-methyl)formamidopyrimidine.. It catalyses the reaction 2'-deoxyribonucleotide-(2'-deoxyribose 5'-phosphate)-2'-deoxyribonucleotide-DNA = a 3'-end 2'-deoxyribonucleotide-(2,3-dehydro-2,3-deoxyribose 5'-phosphate)-DNA + a 5'-end 5'-phospho-2'-deoxyribonucleoside-DNA + H(+). Involved in base excision repair of DNA damaged by oxidation or by mutagenic agents. Acts as a DNA glycosylase that recognizes and removes damaged bases. Has a preference for oxidized purines, such as 7,8-dihydro-8-oxoguanine (8-oxoG). Has AP (apurinic/apyrimidinic) lyase activity and introduces nicks in the DNA strand. Cleaves the DNA backbone by beta-delta elimination to generate a single-strand break at the site of the removed base with both 3'- and 5'-phosphates. The chain is Formamidopyrimidine-DNA glycosylase (mutM) from Cytobacillus firmus (Bacillus firmus).